A 56-amino-acid chain; its full sequence is Conotoxin Cal6.41b (56 aa).

An N-terminal signal peptide occupies residues Met-1–Thr-23. Cystine bridges form between Cys-27/Cys-41, Cys-33/Cys-50, and Cys-40/Cys-54.

In terms of tissue distribution, expressed by the venom duct.

Its subcellular location is the secreted. Probable neurotoxin. This chain is Conotoxin Cal6.41b, found in Californiconus californicus (California cone).